The sequence spans 594 residues: Actin-histidine N-methyltransferase (594 aa).

Residues Met-1–Pro-22 form a disordered region. The segment covering Gln-10–Val-20 has biased composition (polar residues). Residues Arg-75, Glu-104 to Phe-106, Arg-254, Asp-275 to His-279, and Ser-325 to Phe-327 contribute to the S-adenosyl-L-methionine site. Residues Glu-94 to Gly-314 form the SET domain. The residue at position 513 (Ser-513) is a Phosphoserine. Positions Glu-549–Glu-594 are disordered. The span at Gly-555 to Gln-572 shows a compositional bias: polar residues. The span at Glu-573–Lys-582 shows a compositional bias: basic and acidic residues. Over residues Gly-583 to Glu-594 the composition is skewed to polar residues.

Belongs to the class V-like SAM-binding methyltransferase superfamily. SETD3 actin-histidine methyltransferase family. In terms of assembly, interacts with MYOD1. In terms of processing, phosphorylated by GSK3B, which is required for recognition by the SCF(FBXW7) complex and subsequent degradation. Post-translationally, ubiquitinated by the SCF(FBXW7) complex following phosphorylation by GSK3B, leading to its degradation by the proteasome.

It localises to the cytoplasm. Its subcellular location is the nucleus. The catalysed reaction is L-histidyl-[protein] + S-adenosyl-L-methionine = N(tele)-methyl-L-histidyl-[protein] + S-adenosyl-L-homocysteine + H(+). In terms of biological role, protein-histidine N-methyltransferase that specifically mediates 3-methylhistidine (tele-methylhistidine) methylation of actin at 'His-73'. Histidine methylation of actin is required for smooth muscle contraction of the laboring uterus during delivery. Does not have protein-lysine N-methyltransferase activity and probably only catalyzes histidine methylation of actin. The protein is Actin-histidine N-methyltransferase of Homo sapiens (Human).